We begin with the raw amino-acid sequence, 804 residues long: DNA gyrase subunit B (804 aa).

The 116-residue stretch at 431–546 (CEMYIVEGDS…NGCVYIAQPP (116 aa)) folds into the Toprim domain. Positions 437, 511, and 513 each coordinate Mg(2+).

Belongs to the type II topoisomerase GyrB family. As to quaternary structure, heterotetramer, composed of two GyrA and two GyrB chains. In the heterotetramer, GyrA contains the active site tyrosine that forms a transient covalent intermediate with DNA, while GyrB binds cofactors and catalyzes ATP hydrolysis. Mg(2+) is required as a cofactor. Mn(2+) serves as cofactor. It depends on Ca(2+) as a cofactor.

The protein resides in the cytoplasm. It carries out the reaction ATP-dependent breakage, passage and rejoining of double-stranded DNA.. A type II topoisomerase that negatively supercoils closed circular double-stranded (ds) DNA in an ATP-dependent manner to modulate DNA topology and maintain chromosomes in an underwound state. Negative supercoiling favors strand separation, and DNA replication, transcription, recombination and repair, all of which involve strand separation. Also able to catalyze the interconversion of other topological isomers of dsDNA rings, including catenanes and knotted rings. Type II topoisomerases break and join 2 DNA strands simultaneously in an ATP-dependent manner. This chain is DNA gyrase subunit B, found in Chlamydia muridarum (strain MoPn / Nigg).